The following is a 410-amino-acid chain: MAAEIHSRPQSSRPVLLSKIEGHQDAVTAALLIPKEDGVITASEDRTIRVWLKRDSGQYWPSIYHTMASPCSAMAYHHDSRRIFVGQDNGAVMEFHVSEDFNKMNFIKTYPAHQNRVTAIIFSLATEWVISTGHDKCVSWMCTRSGNMLGRHFFSSWASCLQYDFDTQYAFVGDYSGQITLLKLEQSTCSVITTLKGHEGSIACLWWDPIQRLLFSGASDNSVIMWDIGGRKGRTLLLQGHHDRVQALCYLQLTRQLVSCSSDGGIAVWNMDVSREEAPQWLESDSCQKCEQPFFWNIKQMWDTKTLGLRQHHCRKCGQAVCGKCSSKRSSYPVMGFEFQVRVCDSCYDSIKDEDRTSLATFHEGKHNISHMSMDVARGLMVTCGTDRVVKIWDMTPVVGCSLATGFSPH.

WD repeat units lie at residues 22 to 61 (GHQDAVTAALLIPKEDGVITASEDRTIRVWLKRDSGQYWP), 66 to 105 (TMASPCSAMAYHHDSRRIFVGQDNGAVMEFHVSEDFNKMN), 112 to 150 (AHQNRVTAIIFSLATEWVISTGHDKCVSWMCTRSGNMLG), 153 to 192 (FFSSWASCLQYDFDTQYAFVGDYSGQITLLKLEQSTCSVI), 197 to 236 (GHEGSIACLWWDPIQRLLFSGASDNSVIMWDIGGRKGRTL), and 240 to 279 (GHHDRVQALCYLQLTRQLVSCSSDGGIAVWNMDVSREEAP). The segment at 281–352 (WLESDSCQKC…VCDSCYDSIK (72 aa)) adopts an FYVE-type zinc-finger fold. 8 residues coordinate Zn(2+): Cys-287, Cys-290, Cys-314, Cys-317, Cys-322, Cys-325, Cys-344, and Cys-347. The stretch at 364–403 (EGKHNISHMSMDVARGLMVTCGTDRVVKIWDMTPVVGCSL) is one WD 7 repeat. Phosphoserine is present on Ser-408.

Binds PtdIns3P in vitro with high specificity over other phosphoinositides. Interacts (via WD repeat 2) with tyrosine-phosphorylated TLR3 (via TIR domain) in response to poly(I:C). Interacts with TLR4 in response to LPS. Interacts with TICAM1 in response to poly(I:C).

It localises to the early endosome. Functionally, positively regulates TLR3- and TLR4-mediated signaling pathways by bridging the interaction between TLR3 or TLR4 and TICAM1. Promotes TLR3/4 ligand-induced activation of transcription factors IRF3 and NF-kappa-B, as well as the production of IFN-beta and inflammatory cytokines. This chain is WD repeat and FYVE domain-containing protein 1 (WDFY1), found in Bos taurus (Bovine).